The following is a 433-amino-acid chain: Nucleoprotein (433 aa).

The rdRP binding stretch occupies residues 1-50 (MSDLTDIQEEITRHEQQLVVARQKLKDAERAVEVYPDDVIKNTLQARQQT). 2 homomultimerization regions span residues 1–79 (MSDL…TKPT) and 100–125 (NVLDVNAIDIEEPSGQTADWYTIGVY). Residues 1–100 (MSDLTDIQEE…KERSSLRYGN (100 aa)) are chaperone activity. Residues 1–175 (MSDLTDIQEE…EDINGIRRPK (175 aa)) are viral panhandle binding. Positions 4–71 (LTDIQEEITR…KRRMADAVSR (68 aa)) form a coiled coil. Positions 69–78 (VSRKKMDTKP) are enriched in basic and acidic residues. The tract at residues 69-89 (VSRKKMDTKPTDPTGIEPDDH) is disordered. Positions 80-248 (DPTGIEPDDH…FMEKECPFIK (169 aa)) are interaction with glycoprotein N. An interaction with host RPS19 region spans residues 150–175 (KENKGTRIRFKDDTSFEDINGIRRPK). The viral RNA-binding stretch occupies residues 175 to 217 (KHLYVSMPTAQSTMKAEELTPGRFRTIVCGLFPTQIQVRNIMS). The YxxL motif lies at 178–181 (YVSM). Positions 188–191 (MKAE) are interaction with host UBE2I/UBC9. A homomultimerization region spans residues 377-425 (GIQLDQRIILLYMLEWGKEMVDHFHLGDDMDPELRGLAQSLIDQKVKEI). Residues 377–433 (GIQLDQRIILLYMLEWGKEMVDHFHLGDDMDPELRGLAQSLIDQKVKEISNQEPLKI) are interaction with host DAXX.

It belongs to the hantavirus nucleocapsid protein family. Homotrimer. Homomultimer. Homomultimerizes and binds to viral genomic RNA to form the nucleocapsid. Interacts with host MAP1LC3B; this interaction participates to the protection of Gn from virus-triggered autophagy. Interacts with host SNAP29; this interaction participates to the protection of glycoprotein N from virus-triggered autophagy. Interacts (via N-terminus) with host RPS19; this interaction probably mediates the loading of the 40S ribosomal subunit on viral capped mRNA during N-mediated translation initiation. Interacts with the viral RdRp. Interacts with host SUMO1 (via N-terminus). Interacts with host DAXX. Interacts with the viral glycoprotein N (via C-terminus). Interacts with the viral glycoprotein C (via C-terminus).

The protein localises to the virion. The protein resides in the host cytoplasm. It is found in the host perinuclear region. Its subcellular location is the host Golgi apparatus. It localises to the host cis-Golgi network. Encapsidates the genome protecting it from nucleases. The encapsidated genomic RNA is termed the nucleocapsid (NC) and serves as template for transcription and replication. The nucleocapsid has a left-handed helical structure. As a trimer, specifically binds and acts as a chaperone to unwind the panhandle structure formed by the viral RNA (vRNA) termini. Involved in the transcription and replication initiation of vRNA by mediating primer annealing. Plays a role in cap snatching by sequestering capped RNAs in P bodies for use by the viral RdRp during transcription initiation. Substitutes for the cellular cap-binding complex (eIF4F) to preferentially facilitate the translation of capped mRNAs. Initiates the translation by specifically binding to the cap and 40S ribosomal subunit. Prevents the viral glycoprotein N (Gn) from autophagy-dependent breakdown maybe by blocking autophagosome formation. Inhibits host EIF2AK2/PKR dimerization to prevent PKR-induced translational shutdown in cells and thus the activation of the antiviral state. Also displays sequence-unspecific DNA endonuclease activity. This Homo sapiens (Human) protein is Nucleoprotein (N).